The sequence spans 665 residues: Pentatricopeptide repeat-containing protein At3g02490, mitochondrial (665 aa).

The N-terminal 37 residues, 1–37 (MRYQWRSLLFRSYRSSPRPFLSHHSRFQVISNSTRSF), are a transit peptide targeting the mitochondrion. PPR repeat units follow at residues 280–314 (DEKT…GYEM), 315–349 (EMET…SISN), 352–388 (TPHC…GNVV), 389–423 (PDVM…GYVP), 424–458 (SGDL…GNHL), 459–493 (DDKA…EGVS), 495–530 (AGYA…QLKP), and 536–570 (KIMV…GFPP).

This sequence belongs to the PPR family. P subfamily.

It localises to the mitochondrion. The polypeptide is Pentatricopeptide repeat-containing protein At3g02490, mitochondrial (Arabidopsis thaliana (Mouse-ear cress)).